The chain runs to 1411 residues: ATP-dependent permease PDR11 (1411 aa).

Residues S2–Q388 are Cytoplasmic-facing. Residues V31–N273 form the ABC transporter 1 domain. A helical transmembrane segment spans residues F389–T409. The Extracellular portion of the chain corresponds to T410–S418. The helical transmembrane segment at L419–F439 threads the bilayer. The Cytoplasmic segment spans residues Q440–K471. A helical membrane pass occupies residues F472–A492. Over A493–R494 the chain is Extracellular. Residues F495–L515 traverse the membrane as a helical segment. The Cytoplasmic segment spans residues T516–S524. Residues M525–I545 form a helical membrane-spanning segment. The Extracellular portion of the chain corresponds to Y546–F636. An N-linked (GlcNAc...) asparagine glycan is attached at N595. Residues G637–I657 form a helical membrane-spanning segment. The Cytoplasmic portion of the chain corresponds to T658–T1090. The ABC transporter 2 domain maps to I751–F979. G782 to T789 contributes to the ATP binding site. Residues Y1091–W1111 form a helical membrane-spanning segment. The Extracellular portion of the chain corresponds to R1112–I1117. A helical membrane pass occupies residues N1118 to I1138. Over N1139–E1175 the chain is Cytoplasmic. Residues L1176–F1196 form a helical membrane-spanning segment. Residues E1197–G1204 lie on the Extracellular side of the membrane. A helical transmembrane segment spans residues V1205 to L1225. Residues Y1226 to D1230 are Cytoplasmic-facing. The helical transmembrane segment at L1231–V1251 threads the bilayer. The Extracellular segment spans residues M1252–N1355. 3 N-linked (GlcNAc...) asparagine glycosylation sites follow: N1289, N1324, and N1346. The chain crosses the membrane as a helical span at residues F1356–L1376. The Cytoplasmic segment spans residues T1377–V1411.

This sequence belongs to the ABC transporter superfamily. ABCG family. PDR (TC 3.A.1.205) subfamily.

It localises to the membrane. Functionally, transporter involved in the uptake of sterol. This is ATP-dependent permease PDR11 (PDR11) from Saccharomyces cerevisiae (strain ATCC 204508 / S288c) (Baker's yeast).